The primary structure comprises 293 residues: Proline iminopeptidase (293 aa).

One can recognise an AB hydrolase-1 domain in the interval 28–277 (KPLVLLHGGP…YSRHMPFVEE (250 aa)). Ser104 acts as the Nucleophile in catalysis. Asp244 is a catalytic residue. His271 serves as the catalytic Proton donor.

Belongs to the peptidase S33 family.

It catalyses the reaction Release of N-terminal proline from a peptide.. In terms of biological role, releases the N-terminal proline from various substrates. In Clostridioides difficile (strain 630) (Peptoclostridium difficile), this protein is Proline iminopeptidase.